The following is a 472-amino-acid chain: Inhibitor of Apoptosis OPG037 (472 aa).

6 ANK repeats span residues 97–126 (DGNY…DPNA), 130–161 (HNKT…KINN), 233–263 (DGNT…DVNK), 267–297 (FGDS…VITD), 322–351 (YDST…ICED), and 353–377 (MYYA…SVDF).

It belongs to the orthopoxvirus OPG037 protein family. May interact with host caspase-9-Apaf-1 complex.

It localises to the host cytoplasm. In terms of biological role, inhibits host apoptosis. Acts by associating with host apoptosome. This is Inhibitor of Apoptosis OPG037 (OPG037) from Vaccinia virus (strain Western Reserve) (VACV).